We begin with the raw amino-acid sequence, 462 residues long: L-seryl-tRNA(Sec) selenium transferase (462 aa).

At Lys293 the chain carries N6-(pyridoxal phosphate)lysine.

Belongs to the SelA family. It depends on pyridoxal 5'-phosphate as a cofactor.

The protein localises to the cytoplasm. The catalysed reaction is L-seryl-tRNA(Sec) + selenophosphate + H(+) = L-selenocysteinyl-tRNA(Sec) + phosphate. The protein operates within aminoacyl-tRNA biosynthesis; selenocysteinyl-tRNA(Sec) biosynthesis; selenocysteinyl-tRNA(Sec) from L-seryl-tRNA(Sec) (bacterial route): step 1/1. Functionally, converts seryl-tRNA(Sec) to selenocysteinyl-tRNA(Sec) required for selenoprotein biosynthesis. In Clostridium botulinum (strain Okra / Type B1), this protein is L-seryl-tRNA(Sec) selenium transferase.